The sequence spans 212 residues: Disintegrin-like halysetin (212 aa).

Residues 4-90 (PPVCGNELLE…ECPADVFHKN (87 aa)) enclose the Disintegrin domain. Cystine bridges form between cysteine 7/cysteine 26, cysteine 18/cysteine 36, cysteine 62/cysteine 82, cysteine 69/cysteine 94, cysteine 101/cysteine 106, cysteine 113/cysteine 128, cysteine 151/cysteine 158, cysteine 163/cysteine 174, and cysteine 200/cysteine 205. A D/ECD-tripeptide motif is present at residues 68–70 (ECD).

It belongs to the venom metalloproteinase (M12B) family. P-III subfamily. P-IIIb sub-subfamily. In terms of assembly, monomer. Expressed by the venom gland.

It is found in the secreted. Functionally, inhibits human platelet aggregation stimulated by collagen with an IC(50) of 420 nM. The sequence is that of Disintegrin-like halysetin from Gloydius halys (Chinese water mocassin).